A 212-amino-acid chain; its full sequence is Putative 3-methyladenine DNA glycosylase (212 aa).

The protein belongs to the DNA glycosylase MPG family.

The sequence is that of Putative 3-methyladenine DNA glycosylase from Nocardia farcinica (strain IFM 10152).